We begin with the raw amino-acid sequence, 477 residues long: MLTPLAPSVKRAPRKTLFAKPYVQVLVAILLGVAVGHFYPQIGENLKPLGDAFIKLVKMIIAPVIFLTVSTGIAGMSDLQKVGRVAGKAMVYFVTFSTLALIVGLIVGNVIQPGAGLNIDLTSLDVQAVNGYASKAHEQSVTGFLMNMIPTTIVGAFVEGDILQVLFFSVLFGIALAMVGESGKSVLSFLQDLTAPVFKLVGILMKAAPIGAFGAMAFTIGKYGIGSVANLAMLVGTFYLTAFLFVFGVLGAVCRYNGFSIFSLIRYIKEELLLVLGTSSSEAALPSLMEKMEKAGAKRSVVGLVIPTGYSFNLDGTNIYMTLAALFIAQATNTDLSVGDQVLLLLVAMLSSKGAAGVTGAGFVTLAATLSVVPAVPVAGMALILGVDRFMSECRALTNLVGNAVASLVVARWEGELDQAQLKAAFCGHQPAETSAGQPLITPAPSNSAASLPVESPGWSQTPDDRAAGSKQTLAGR.

A run of 8 helical transmembrane segments spans residues 21-39 (PYVQ…GHFY), 59-76 (MIIA…IAGM), 89-111 (AMVY…GNVI), 162-179 (ILQV…LAMV), 200-221 (LVGI…FTIG), 231-253 (LAML…LGAV), 342-364 (VLLL…AGFV), and 368-387 (ATLS…ILGV). Residues 435–477 (SAGQPLITPAPSNSAASLPVESPGWSQTPDDRAAGSKQTLAGR) form a disordered region.

It belongs to the dicarboxylate/amino acid:cation symporter (DAACS) (TC 2.A.23) family.

Its subcellular location is the cell inner membrane. In terms of biological role, responsible for the transport of dicarboxylates such as succinate, fumarate, and malate from the periplasm across the membrane. This transport system plays an important role in the energy supply of rhizobium-legume symbionts. The polypeptide is C4-dicarboxylate transport protein 1 (dctA1) (Mesorhizobium japonicum (strain LMG 29417 / CECT 9101 / MAFF 303099) (Mesorhizobium loti (strain MAFF 303099))).